A 69-amino-acid chain; its full sequence is Cytoinsectotoxin-2a (69 aa).

This sequence belongs to the cationic peptide 06 (cytoinsectotoxin) family. As to expression, expressed by the venom gland.

The protein localises to the secreted. Functionally, insecticidal and antimicrobial peptide. Has insecticidal activity against larvae of flesh fly S.carnaria. Has antibacterial activity against Gram-positive bacterium B.subtilis B-501 (MIC=1.25 uM) and Gram-negative bacterium E.coli DH5alpha (MIC=2.5 uM). This chain is Cytoinsectotoxin-2a, found in Lachesana tarabaevi (Spider).